The following is a 1265-amino-acid chain: 5-oxoprolinase (1265 aa).

The protein belongs to the oxoprolinase family. Homodimer.

The protein localises to the cytoplasm. It is found in the cytosol. The enzyme catalyses 5-oxo-L-proline + ATP + 2 H2O = L-glutamate + ADP + phosphate + H(+). Catalyzes the cleavage of 5-oxo-L-proline to form L-glutamate coupled to the hydrolysis of ATP to ADP and inorganic phosphate. The protein is 5-oxoprolinase (oplah) of Dictyostelium discoideum (Social amoeba).